Here is a 373-residue protein sequence, read N- to C-terminus: 3 beta-hydroxysteroid dehydrogenase/Delta 5--&gt;4-isomerase type 3 (373 aa).

Tyr155 functions as the Proton acceptor in the catalytic mechanism. Lys159 is a binding site for NAD(+). A helical membrane pass occupies residues 288–308; it reads VPILYWLAFLLETVSFLLSPI.

It belongs to the 3-beta-HSD family. Liver and kidney. Greater expression in liver.

The protein resides in the endoplasmic reticulum membrane. The protein localises to the mitochondrion membrane. It carries out the reaction a 3beta-hydroxy-Delta(5)-steroid + NAD(+) = a 3-oxo-Delta(5)-steroid + NADH + H(+). It catalyses the reaction a 3-oxo-Delta(5)-steroid = a 3-oxo-Delta(4)-steroid. Its pathway is lipid metabolism; steroid biosynthesis. In terms of biological role, 3-beta-HSD is a bifunctional enzyme, that catalyzes the oxidative conversion of Delta(5)-ene-3-beta-hydroxy steroid, and the oxidative conversion of ketosteroids. The 3-beta-HSD enzymatic system plays a crucial role in the biosynthesis of all classes of hormonal steroids. In Mus musculus (Mouse), this protein is 3 beta-hydroxysteroid dehydrogenase/Delta 5--&gt;4-isomerase type 3 (Hsd3b3).